Consider the following 651-residue polypeptide: Beta-glucuronidase (651 aa).

An N-terminal signal peptide occupies residues 1-22 (MARGSAVAWAALGPLLWGCALG). N-linked (GlcNAc...) asparagine glycans are attached at residues N173, N272, and N420. E451 acts as the Proton donor in catalysis. N-linked (GlcNAc...) asparagine glycosylation is present at N631.

Belongs to the glycosyl hydrolase 2 family. In terms of assembly, homotetramer. In terms of processing, N-linked glycosylated with 3 to 4 oligosaccharide chains.

The protein localises to the lysosome. The catalysed reaction is a beta-D-glucuronoside + H2O = D-glucuronate + an alcohol. With respect to regulation, inhibited by L-aspartic acid. Its function is as follows. Plays an important role in the degradation of dermatan and keratan sulfates. The protein is Beta-glucuronidase (GUSB) of Homo sapiens (Human).